The chain runs to 145 residues: Large ribosomal subunit protein uL16 (145 aa).

It belongs to the universal ribosomal protein uL16 family. In terms of assembly, part of the 50S ribosomal subunit.

Binds 23S rRNA and is also seen to make contacts with the A and possibly P site tRNAs. In Shouchella clausii (strain KSM-K16) (Alkalihalobacillus clausii), this protein is Large ribosomal subunit protein uL16.